The sequence spans 335 residues: Flagellar P-ring protein (335 aa).

Residues 1 to 17 (MNKPMLMLITFATSLLA) form the signal peptide.

This sequence belongs to the FlgI family. The basal body constitutes a major portion of the flagellar organelle and consists of four rings (L,P,S, and M) mounted on a central rod.

Its subcellular location is the periplasm. It localises to the bacterial flagellum basal body. Assembles around the rod to form the L-ring and probably protects the motor/basal body from shearing forces during rotation. The sequence is that of Flagellar P-ring protein from Borreliella burgdorferi (strain ZS7) (Borrelia burgdorferi).